A 389-amino-acid polypeptide reads, in one-letter code: S-adenosylmethionine synthase (389 aa).

H19 contributes to the ATP binding site. Mg(2+) is bound at residue D21. E47 provides a ligand contact to K(+). L-methionine contacts are provided by E60 and Q103. A flexible loop region spans residues Q103 to R113. ATP-binding positions include D168–K170, R234–F235, D243, R249–K250, A266, and K270. Residue D243 participates in L-methionine binding. L-methionine is bound at residue K274.

The protein belongs to the AdoMet synthase family. In terms of assembly, homotetramer; dimer of dimers. Requires Mg(2+) as cofactor. The cofactor is K(+).

It localises to the cytoplasm. It catalyses the reaction L-methionine + ATP + H2O = S-adenosyl-L-methionine + phosphate + diphosphate. It participates in amino-acid biosynthesis; S-adenosyl-L-methionine biosynthesis; S-adenosyl-L-methionine from L-methionine: step 1/1. Its function is as follows. Catalyzes the formation of S-adenosylmethionine (AdoMet) from methionine and ATP. The overall synthetic reaction is composed of two sequential steps, AdoMet formation and the subsequent tripolyphosphate hydrolysis which occurs prior to release of AdoMet from the enzyme. The protein is S-adenosylmethionine synthase of Maridesulfovibrio salexigens (strain ATCC 14822 / DSM 2638 / NCIMB 8403 / VKM B-1763) (Desulfovibrio salexigens).